A 259-amino-acid chain; its full sequence is Imidazole glycerol phosphate synthase subunit HisF (259 aa).

Residues Asp-11 and Asp-130 contribute to the active site.

It belongs to the HisA/HisF family. In terms of assembly, heterodimer of HisH and HisF.

It localises to the cytoplasm. It carries out the reaction 5-[(5-phospho-1-deoxy-D-ribulos-1-ylimino)methylamino]-1-(5-phospho-beta-D-ribosyl)imidazole-4-carboxamide + L-glutamine = D-erythro-1-(imidazol-4-yl)glycerol 3-phosphate + 5-amino-1-(5-phospho-beta-D-ribosyl)imidazole-4-carboxamide + L-glutamate + H(+). It functions in the pathway amino-acid biosynthesis; L-histidine biosynthesis; L-histidine from 5-phospho-alpha-D-ribose 1-diphosphate: step 5/9. Its function is as follows. IGPS catalyzes the conversion of PRFAR and glutamine to IGP, AICAR and glutamate. The HisF subunit catalyzes the cyclization activity that produces IGP and AICAR from PRFAR using the ammonia provided by the HisH subunit. The protein is Imidazole glycerol phosphate synthase subunit HisF of Nitratidesulfovibrio vulgaris (strain DP4) (Desulfovibrio vulgaris).